Reading from the N-terminus, the 118-residue chain is Class II hydrophobin CRP (118 aa).

The signal sequence occupies residues 1-22 (MQFSIIAISFLASLAMASPAKR). The interval 20-46 (AKRGGGGGGSGSGSGSGSGSGSGGGST) is disordered. Gly residues predominate over residues 22 to 45 (RGGGGGGSGSGSGSGSGSGSGGGS). 7 consecutive repeat copies span residues 29-30 (SG), 31-32 (SG), 33-34 (SG), 35-36 (SG), 37-38 (SG), 39-40 (SG), and 41-42 (SG). The tract at residues 29 to 42 (SGSGSGSGSGSGSG) is 7 X 2 AA tandem repeats of S-G. 4 disulfide bridges follow: cysteine 51–cysteine 100, cysteine 61–cysteine 91, cysteine 62–cysteine 74, and cysteine 101–cysteine 112.

It belongs to the cerato-ulmin hydrophobin family. Homotetramer. Further self-assembles to form highly ordered films at water-air interfaces through intermolecular interactions.

It localises to the secreted. The protein resides in the cell wall. Aerial growth, conidiation, and dispersal of filamentous fungi in the environment rely upon a capability of their secreting small amphipathic proteins called hydrophobins (HPBs) with low sequence identity. Class I can self-assemble into an outermost layer of rodlet bundles on aerial cell surfaces, conferring cellular hydrophobicity that supports fungal growth, development and dispersal; whereas Class II form highly ordered films at water-air interfaces through intermolecular interactions but contribute nothing to the rodlet structure. Cryparin is a class II hydrophobin that is the most abundant protein produced by this fungus when grown in liquid culture and that plays an essential role in the fitness of this important plant pathogen by facilitating the eruption of the fungal fruiting bodies through the bark of its host tree. In Cryphonectria parasitica (Chestnut blight fungus), this protein is Class II hydrophobin CRP.